Consider the following 379-residue polypeptide: 8-amino-7-oxononanoate synthase (379 aa).

Positions 27 and 34 each coordinate substrate. 114-115 (GY) is a pyridoxal 5'-phosphate binding site. H139 is a substrate binding site. Residues S187, 212–215 (DDAH), and 232–235 (TLSK) contribute to the pyridoxal 5'-phosphate site. K235 carries the post-translational modification N6-(pyridoxal phosphate)lysine. T344 lines the substrate pocket.

It belongs to the class-II pyridoxal-phosphate-dependent aminotransferase family. BioF subfamily. As to quaternary structure, homodimer. Requires pyridoxal 5'-phosphate as cofactor.

The enzyme catalyses 6-carboxyhexanoyl-[ACP] + L-alanine + H(+) = (8S)-8-amino-7-oxononanoate + holo-[ACP] + CO2. Its pathway is cofactor biosynthesis; biotin biosynthesis. In terms of biological role, catalyzes the decarboxylative condensation of pimeloyl-[acyl-carrier protein] and L-alanine to produce 8-amino-7-oxononanoate (AON), [acyl-carrier protein], and carbon dioxide. The polypeptide is 8-amino-7-oxononanoate synthase (Methylobacterium nodulans (strain LMG 21967 / CNCM I-2342 / ORS 2060)).